We begin with the raw amino-acid sequence, 323 residues long: Fructose-1,6-bisphosphatase class 1 (323 aa).

Mg(2+) is bound by residues E84, D103, L105, and D106. Substrate is bound by residues 106–109 (DGSS), N198, and K264. E270 lines the Mg(2+) pocket.

Belongs to the FBPase class 1 family. Homotetramer. It depends on Mg(2+) as a cofactor.

The protein resides in the cytoplasm. It carries out the reaction beta-D-fructose 1,6-bisphosphate + H2O = beta-D-fructose 6-phosphate + phosphate. It functions in the pathway carbohydrate biosynthesis; gluconeogenesis. The sequence is that of Fructose-1,6-bisphosphatase class 1 from Cellvibrio japonicus (strain Ueda107) (Pseudomonas fluorescens subsp. cellulosa).